Consider the following 105-residue polypeptide: Large ribosomal subunit protein uL24 (105 aa).

This sequence belongs to the universal ribosomal protein uL24 family. As to quaternary structure, part of the 50S ribosomal subunit.

Functionally, one of two assembly initiator proteins, it binds directly to the 5'-end of the 23S rRNA, where it nucleates assembly of the 50S subunit. Its function is as follows. One of the proteins that surrounds the polypeptide exit tunnel on the outside of the subunit. In Xylella fastidiosa (strain 9a5c), this protein is Large ribosomal subunit protein uL24.